The sequence spans 424 residues: Lactate racemase (424 aa).

72 to 75 provides a ligand contact to Ni(II)-pyridinium-3,5-bisthiocarboxylate mononucleotide; sequence DHTR. Residues H108 and H174 each act as proton donor/acceptor in the active site. Residues K184 and H200 each coordinate Ni(II)-pyridinium-3,5-bisthiocarboxylate mononucleotide. Q295 and K298 together coordinate substrate.

The protein belongs to the lactate racemase family. In terms of assembly, homodimer. Ni(II)-pyridinium-3,5-bisthiocarboxylate mononucleotide is required as a cofactor.

The enzyme catalyses (S)-lactate = (R)-lactate. Its activity is regulated as follows. Activation of the apo-enzyme requires the three accessory proteins LarB, LarE and LarC, that are involved in the biosynthesis of the nickel-pincer cofactor of LarA. Inhibited by sulfite that behaves as a mixed inhibitor. In terms of biological role, catalyzes the interconversion between the D- and L-isomers of lactate. May act as a rescue enzyme to ensure D-lactate production in physiological conditions where its production by the D-lactate dehydrogenase LdhD is not sufficient. D-Lactate is absolutely required for growth of L.plantarum and is an essential component of the cell wall peptidoglycan in this species, where it is incorporated as the last residue of the muramoyl-pentadepsipeptide peptidoglycan precursor; its incorporation confers high level of vancomycin resistance. The chain is Lactate racemase from Lactiplantibacillus plantarum (strain ATCC BAA-793 / NCIMB 8826 / WCFS1) (Lactobacillus plantarum).